Reading from the N-terminus, the 252-residue chain is 5-oxoprolinase subunit A (252 aa).

This sequence belongs to the LamB/PxpA family. In terms of assembly, forms a complex composed of PxpA, PxpB and PxpC.

The catalysed reaction is 5-oxo-L-proline + ATP + 2 H2O = L-glutamate + ADP + phosphate + H(+). Functionally, catalyzes the cleavage of 5-oxoproline to form L-glutamate coupled to the hydrolysis of ATP to ADP and inorganic phosphate. This Mycobacterium marinum (strain ATCC BAA-535 / M) protein is 5-oxoprolinase subunit A.